Consider the following 180-residue polypeptide: Translation initiation factor IF-3 (180 aa).

Belongs to the IF-3 family. As to quaternary structure, monomer.

It localises to the cytoplasm. IF-3 binds to the 30S ribosomal subunit and shifts the equilibrium between 70S ribosomes and their 50S and 30S subunits in favor of the free subunits, thus enhancing the availability of 30S subunits on which protein synthesis initiation begins. The protein is Translation initiation factor IF-3 of Pectobacterium atrosepticum (strain SCRI 1043 / ATCC BAA-672) (Erwinia carotovora subsp. atroseptica).